Consider the following 1046-residue polypeptide: UDP-N-acetylglucosamine--peptide N-acetylglucosaminyltransferase 110 kDa subunit (1046 aa).

Position 2 is an N-acetylalanine (alanine 2). Phosphoserine; by GSK3-beta; alternate is present on residues serine 3 and serine 4. O-linked (GlcNAc) serine; alternate glycans are attached at residues serine 3 and serine 4. O-linked (GlcNAc) serine glycosylation occurs at aspartate 10. An O-linked (GlcNAc) threonine glycan is attached at threonine 12. O-linked (GlcNAc) serine glycosylation occurs at methionine 18. Serine 20 is subject to Phosphoserine. One copy of the TPR 1 repeat lies at 21 to 54 (FQGLAELAHREYQAGDFEAAERHCMQLWRQEPDN). O-linked (GlcNAc) threonine glycosylation occurs at glutamate 38. 2 O-linked (GlcNAc) serine glycosylation sites follow: proline 52 and glycine 56. TPR repeat units follow at residues 89 to 122 (AEAY…KPDF), 123 to 156 (IDGY…NPDL), 157 to 190 (YCVR…QPNF), 191 to 224 (AVAW…DPNF), 225 to 258 (LDAY…SPNH), 259 to 292 (AVVH…QPHF), 293 to 326 (PDAY…CPTH), 327 to 360 (ADSL…FPEF), 361 to 394 (AAAH…SPTF), 395 to 428 (ADAY…NPAF), and 429 to 462 (ADAH…KPDF). Serine 399 carries O-linked (GlcNAc) serine; by autocatalysis glycosylation. Threonine 454 is subject to Phosphothreonine; by AMPK. One copy of the TPR 13; truncated repeat lies at 463–473 (PDAYCNLAHCL). The DFP motif motif lies at 464–466 (DAY). The short motif at 487-503 (KKLVSIVADQLEKNRLP) is the Nuclear localization signal element. Histidine 508 (proton acceptor) is an active-site residue. UDP contacts are provided by residues glutamine 849, lysine 852, 906-908 (APK), 911-914 (HVRR), 930-932 (HTT), and aspartate 935. Tyrosine 989 is subject to Phosphotyrosine. The interval 991-1010 (KKVRGKVWKQRISSPLFNTK) is required for phosphatidylinositol 3,4,5-triphosphate binding.

The protein belongs to the glycosyltransferase 41 family. O-GlcNAc transferase subfamily. Monomer; may exist in different oligomerization states in cells. Homotrimer, oligomerizes via TPR repeats 6 and 7. Trimerization is not necessary for activity in vitro, however it increases affinity for UDP-GlcNAc. Component of a THAP1/THAP3-HCFC1-OGT complex. Component of the NSL complex at least composed of MOF/KAT8, KANSL1, KANSL2, KANSL3, MCRS1, PHF20, OGT1/OGT, WDR5 and HCFC1. Found in a complex with KIF5B, RHOT1, RHOT2 and TRAK1. Found in a complex composed of at least SINHCAF, SIN3A, HDAC1, SAP30, RBBP4, OGT and TET1. Component of a complex composed of KMT2E/MLL5 (isoform 3), OGT (isoform 1) and USP7; the complex stabilizes KMT2E/MLL5, preventing KMT2E/MLL5 ubiquitination and proteasomal-mediated degradation. Interacts (via TPRs 1-6) with SIN3A; the interaction mediates transcriptional repression in parallel with histone deacetylase. Interacts (via TPR 5-6) with TET1, TET2 and TET3. Interacts (via TPR repeats 6 and 7) with ATXN10. Interacts with NSD2. Interacts with PROSER1; this interaction mediates TET2 O-GlcNAcylation and stability by promoting the interaction between OGT and TET2. As to quaternary structure, interacts with USP7. In terms of assembly, (Microbial infection) Interacts with human T-cell leukemia virus 1/HTLV-1 protein Tax; this interaction increases Tax interacting partner CREB1 O-GlcNAcylation. Post-translationally, ubiquitinated by the SCF(FBXO31) complex, leading to its proteasomal degradation. Phosphorylation on Ser-3 or Ser-4 by GSK3-beta positively regulates its activity. Phosphorylation at Thr-454 by AMPK promotes nuclear localization. In terms of processing, glycosylated via autocatalysis; O-GlcNAcylation at Ser-399 promotes nuclear localization. Post-translationally, glycosylated via autocatalysis; does not affect the enzyme activity but regulates substrate selectivity. As to expression, highly expressed in pancreas and to a lesser extent in skeletal muscle, heart, brain and placenta. Present in trace amounts in lung and liver.

It localises to the nucleus. The protein resides in the cytoplasm. Its subcellular location is the mitochondrion. The protein localises to the membrane. It is found in the cell membrane. It localises to the mitochondrion membrane. The protein resides in the cell projection. It carries out the reaction L-seryl-[protein] + UDP-N-acetyl-alpha-D-glucosamine = 3-O-(N-acetyl-beta-D-glucosaminyl)-L-seryl-[protein] + UDP + H(+). The enzyme catalyses L-threonyl-[protein] + UDP-N-acetyl-alpha-D-glucosamine = 3-O-(N-acetyl-beta-D-glucosaminyl)-L-threonyl-[protein] + UDP + H(+). The protein operates within protein modification; protein glycosylation. Its activity is regulated as follows. Subject to product inhibition by UDP. In terms of biological role, catalyzes the transfer of a single N-acetylglucosamine from UDP-GlcNAc to a serine or threonine residue in cytoplasmic and nuclear proteins resulting in their modification with a beta-linked N-acetylglucosamine (O-GlcNAc). Glycosylates a large and diverse number of proteins including histone H2B, AKT1, AMPK, ATG4B, CAPRIN1, EZH2, FNIP1, GSDMD, KRT7, LMNA, LMNB1, LMNB2, RPTOR, HOXA1, PFKL, KMT2E/MLL5, MAPT/TAU, TET2, RBL2, RET, NOD2 and HCFC1. Can regulate their cellular processes via cross-talk between glycosylation and phosphorylation or by affecting proteolytic processing. Involved in insulin resistance in muscle and adipocyte cells via glycosylating insulin signaling components and inhibiting the 'Thr-308' phosphorylation of AKT1, enhancing IRS1 phosphorylation and attenuating insulin signaling. Involved in glycolysis regulation by mediating glycosylation of 6-phosphofructokinase PFKL, inhibiting its activity. Plays a key role in chromatin structure by mediating O-GlcNAcylation of 'Ser-112' of histone H2B: recruited to CpG-rich transcription start sites of active genes via its interaction with TET proteins (TET1, TET2 or TET3). As part of the NSL complex indirectly involved in acetylation of nucleosomal histone H4 on several lysine residues. O-GlcNAcylation of 'Ser-75' of EZH2 increases its stability, and facilitating the formation of H3K27me3 by the PRC2/EED-EZH2 complex. Stabilizes KMT2E/MLL5 by mediating its glycosylation, thereby preventing KMT2E/MLL5 ubiquitination. Regulates circadian oscillation of the clock genes and glucose homeostasis in the liver. Stabilizes clock proteins BMAL1 and CLOCK through O-glycosylation, which prevents their ubiquitination and subsequent degradation. Promotes the CLOCK-BMAL1-mediated transcription of genes in the negative loop of the circadian clock such as PER1/2 and CRY1/2. O-glycosylates HCFC1 and regulates its proteolytic processing and transcriptional activity. Component of a THAP1/THAP3-HCFC1-OGT complex that is required for the regulation of the transcriptional activity of RRM1. Regulates mitochondrial motility in neurons by mediating glycosylation of TRAK1. Promotes autophagy by mediating O-glycosylation of ATG4B. Acts as a regulator of mTORC1 signaling by mediating O-glycosylation of RPTOR and FNIP1: O-GlcNAcylation of RPTOR in response to glucose sufficiency promotes activation of the mTORC1 complex. Functionally, the mitochondrial isoform (mOGT) is cytotoxic and triggers apoptosis in several cell types including INS1, an insulinoma cell line. Its function is as follows. Has N-acetylglucosaminyltransferase activity: glycosylates proteins, such as HNRNPU, NEUROD1, NUP62 and PDCD6IP. Displays specific substrate selectivity compared to other isoforms. This Homo sapiens (Human) protein is UDP-N-acetylglucosamine--peptide N-acetylglucosaminyltransferase 110 kDa subunit.